A 284-amino-acid polypeptide reads, in one-letter code: 3-oxoadipate:acetyl-CoA acetyltransferase (284 aa).

Zn(2+) contacts are provided by His47, His49, and Glu229.

It belongs to the BKACE family. The cofactor is Zn(2+).

It catalyses the reaction 3-oxoadipate + acetyl-CoA = acetoacetate + succinyl-CoA. In terms of biological role, catalyzes the condensation of 3-oxoadipate (beta-ketoadipate) and acetyl-CoA, forming acetoacetate and succinyl-CoA. Is likely involved is the degradation of 3-oxoadipate through an alternative pathway, within catechol degradation. The polypeptide is 3-oxoadipate:acetyl-CoA acetyltransferase (Cupriavidus necator (strain ATCC 17699 / DSM 428 / KCTC 22496 / NCIMB 10442 / H16 / Stanier 337) (Ralstonia eutropha)).